The primary structure comprises 521 residues: Serine/threonine-protein kinase A (521 aa).

The 275-residue stretch at 15 to 289 (YQLVELVGSG…DVIIRAIDAI (275 aa)) folds into the Protein kinase domain. ATP contacts are provided by residues 21-29 (VGSGAMGQV) and Lys45. Asp148 (proton acceptor) is an active-site residue.

It belongs to the protein kinase superfamily. Ser/Thr protein kinase family. Autophosphorylated.

The catalysed reaction is L-seryl-[protein] + ATP = O-phospho-L-seryl-[protein] + ADP + H(+). The enzyme catalyses L-threonyl-[protein] + ATP = O-phospho-L-threonyl-[protein] + ADP + H(+). Protein kinase that regulates cellular motility via phosphorylation of membrane proteins. In Synechocystis sp. (strain ATCC 27184 / PCC 6803 / Kazusa), this protein is Serine/threonine-protein kinase A (spkA).